A 111-amino-acid polypeptide reads, in one-letter code: uncharacterized protein (111 aa).

The next 4 helical transmembrane spans lie at 4-21 (FITA…FVSF), 28-47 (LVYF…YMIY), 51-73 (TGIR…VTAF), and 80-102 (SFFF…YLGM).

The protein resides in the cell membrane. This is an uncharacterized protein from Bacillus subtilis (strain 168).